The following is a 401-amino-acid chain: Phosphoglycerate kinase (401 aa).

Substrate contacts are provided by residues 24-26 (DFN), Arg40, 63-66 (HFGR), Arg122, and Arg155. Residues Lys206, Gly297, Glu328, and 357 to 360 (GGDS) each bind ATP.

Belongs to the phosphoglycerate kinase family. Monomer.

The protein localises to the cytoplasm. The catalysed reaction is (2R)-3-phosphoglycerate + ATP = (2R)-3-phospho-glyceroyl phosphate + ADP. It functions in the pathway carbohydrate degradation; glycolysis; pyruvate from D-glyceraldehyde 3-phosphate: step 2/5. This is Phosphoglycerate kinase from Gloeothece citriformis (strain PCC 7424) (Cyanothece sp. (strain PCC 7424)).